Consider the following 244-residue polypeptide: Short-chain dehydrogenase/reductase family member NovK (244 aa).

Residues 9-12 (GGGE), 59-60 (EL), and 154-158 (RPVLD) each bind NADP(+).

The protein belongs to the short-chain dehydrogenases/reductases (SDR) family. As to quaternary structure, heterotetramer; the NovJ(2)K(2) heterotetramer is composed of subunits of 2 NovJ and 2 subunits of NovK.

Its pathway is antibiotic biosynthesis; novobiocin biosynthesis. Non-catalytic subunit of the NovJ(2)K(2) heterotetramer that catalyzes the NADPH-dependent reduction of the tyrosyl moiety of L-beta-OH-Tyr-S-NovH intermediate to yield the tethered beta-ketotyrosyl-S-NovH in the novobiocin biosynthesis pathway. Novobiocin is an aminocoumarin family antibiotic that targets bacterial DNA gyrases. This is Short-chain dehydrogenase/reductase family member NovK (novK) from Streptomyces niveus (Streptomyces spheroides).